Reading from the N-terminus, the 386-residue chain is Succinyl-diaminopimelate desuccinylase (386 aa).

Position 75 (His75) interacts with Zn(2+). The active site involves Asp77. Asp108 is a Zn(2+) binding site. Residue Glu138 is the Proton acceptor of the active site. Positions 139, 167, and 356 each coordinate Zn(2+).

It belongs to the peptidase M20A family. DapE subfamily. In terms of assembly, homodimer. The cofactor is Zn(2+). Co(2+) serves as cofactor.

It carries out the reaction N-succinyl-(2S,6S)-2,6-diaminopimelate + H2O = (2S,6S)-2,6-diaminopimelate + succinate. Its pathway is amino-acid biosynthesis; L-lysine biosynthesis via DAP pathway; LL-2,6-diaminopimelate from (S)-tetrahydrodipicolinate (succinylase route): step 3/3. In terms of biological role, catalyzes the hydrolysis of N-succinyl-L,L-diaminopimelic acid (SDAP), forming succinate and LL-2,6-diaminopimelate (DAP), an intermediate involved in the bacterial biosynthesis of lysine and meso-diaminopimelic acid, an essential component of bacterial cell walls. This is Succinyl-diaminopimelate desuccinylase from Caulobacter vibrioides (strain ATCC 19089 / CIP 103742 / CB 15) (Caulobacter crescentus).